Here is a 31-residue protein sequence, read N- to C-terminus: Cytochrome b6-f complex subunit 6 (31 aa).

The chain crosses the membrane as a helical span at residues 4 to 24 (VVSYLGILAAFALVTIGIFLV).

This sequence belongs to the PetL family. The 4 large subunits of the cytochrome b6-f complex are cytochrome b6, subunit IV (17 kDa polypeptide, PetD), cytochrome f and the Rieske protein, while the 4 small subunits are PetG, PetL, PetM and PetN. The complex functions as a dimer.

Its subcellular location is the plastid. It is found in the chloroplast thylakoid membrane. Functionally, component of the cytochrome b6-f complex, which mediates electron transfer between photosystem II (PSII) and photosystem I (PSI), cyclic electron flow around PSI, and state transitions. PetL is important for photoautotrophic growth as well as for electron transfer efficiency and stability of the cytochrome b6-f complex. This is Cytochrome b6-f complex subunit 6 from Mesostigma viride (Green alga).